Consider the following 449-residue polypeptide: Rubisco accumulation factor 1.2, chloroplastic (449 aa).

Residues 1-61 (MFSLKSLISS…NMIPKNPPAR (61 aa)) constitute a chloroplast transit peptide. The N-terminal alpha-helix stretch occupies residues 75–264 (IPTQFRSLDS…KAKNRLNTEL (190 aa)). Residues 262–288 (TELYGDKEAEKEKEKKKKEEEVKAIRI) are a coiled coil. A C-terminal beta sheet region spans residues 288–434 (IPVVRLKFGE…GMVVLVVRPP (147 aa)).

This sequence belongs to the RAF family. As to quaternary structure, homodimer.

It localises to the plastid. It is found in the chloroplast. In terms of biological role, required for assembly or stability of RuBisCO. Acts at a postchaperonin step to fold and/or assemble the large subunit (rbcL) into RuBisCO. RAF1 brackets an rbcL dimer (rbcL(2)), leading to rbcL(8)-RAF1(4) complex formation. In the next step, RBCS displaces RAF1, thus resulting in holoenzyme formation. This is Rubisco accumulation factor 1.2, chloroplastic from Arabidopsis thaliana (Mouse-ear cress).